The primary structure comprises 164 residues: Pheromone-binding protein 2 (164 aa).

Positions 1-22 (MIRKVLLSVLLAVLMTINLGQA) are cleaved as a signal peptide. 3 cysteine pairs are disulfide-bonded: Cys41-Cys76, Cys72-Cys130, and Cys119-Cys139.

This sequence belongs to the PBP/GOBP family. In terms of tissue distribution, antenna.

Its function is as follows. This major soluble protein in olfactory sensilla of male moths might serve to solubilize the extremely hydrophobic pheromone molecules and to transport pheromone through the aqueous lymph to receptors located on olfactory cilia. This Antheraea pernyi (Chinese oak silk moth) protein is Pheromone-binding protein 2.